The primary structure comprises 738 residues: Cleavage and polyadenylation specificity factor subunit 2 (738 aa).

The protein belongs to the metallo-beta-lactamase superfamily. RNA-metabolizing metallo-beta-lactamase-like family. CPSF2/YSH1 subfamily. CPSF is a heterotetramer composed of four distinct subunits 160, 100, 70 and 30 kDa.

Its subcellular location is the nucleus. In terms of biological role, CPSF plays a key role in pre-mRNA 3'-end formation, recognizing the AAUAAA signal sequence and interacting with poly(A)polymerase and other factors to bring about cleavage and poly(A) addition. The protein is Cleavage and polyadenylation specificity factor subunit 2 of Oryza sativa subsp. japonica (Rice).